The following is a 191-amino-acid chain: Protein Ves (191 aa).

This sequence belongs to the Ves family.

This chain is Protein Ves, found in Escherichia coli O127:H6 (strain E2348/69 / EPEC).